Here is a 460-residue protein sequence, read N- to C-terminus: Chromosomal replication initiator protein DnaA 1 (460 aa).

Residues 1-68 (MRAWEEFLLL…KSGLVNNNNK (68 aa)) form a domain I, interacts with DnaA modulators region. The segment at 68–102 (KPIRVHVTSVDKAAPFYKEKQMQQEKTAYFTMHYG) is domain II. The segment at 103 to 321 (SVNPEMTFSN…HALNLLAKRV (219 aa)) is domain III, AAA+ region. G151, G153, K154, and T155 together coordinate ATP. A domain IV, binds dsDNA region spans residues 322–460 (MYKKLSHQLL…EFFPSEEMII (139 aa)).

This sequence belongs to the DnaA family. As to quaternary structure, oligomerizes as a right-handed, spiral filament on DNA at oriC.

The protein localises to the cytoplasm. In terms of biological role, plays an essential role in the initiation and regulation of chromosomal replication. ATP-DnaA binds to the origin of replication (oriC) to initiate formation of the DNA replication initiation complex once per cell cycle. Binds the DnaA box (a 9 base pair repeat at the origin) and separates the double-stranded (ds)DNA. Forms a right-handed helical filament on oriC DNA; dsDNA binds to the exterior of the filament while single-stranded (ss)DNA is stabiized in the filament's interior. The ATP-DnaA-oriC complex binds and stabilizes one strand of the AT-rich DNA unwinding element (DUE), permitting loading of DNA polymerase. After initiation quickly degrades to an ADP-DnaA complex that is not apt for DNA replication. Binds acidic phospholipids. The sequence is that of Chromosomal replication initiator protein DnaA 1 from Chlamydia pneumoniae (Chlamydophila pneumoniae).